Consider the following 688-residue polypeptide: DNA-directed RNA polymerase subunit beta' (688 aa).

Zn(2+)-binding residues include C69, C71, C87, and C90. The Mg(2+) site is built by D497, D499, and D501.

Belongs to the RNA polymerase beta' chain family. RpoC1 subfamily. In terms of assembly, in plastids the minimal PEP RNA polymerase catalytic core is composed of four subunits: alpha, beta, beta', and beta''. When a (nuclear-encoded) sigma factor is associated with the core the holoenzyme is formed, which can initiate transcription. The cofactor is Mg(2+). It depends on Zn(2+) as a cofactor.

Its subcellular location is the plastid. It localises to the chloroplast. It catalyses the reaction RNA(n) + a ribonucleoside 5'-triphosphate = RNA(n+1) + diphosphate. DNA-dependent RNA polymerase catalyzes the transcription of DNA into RNA using the four ribonucleoside triphosphates as substrates. The protein is DNA-directed RNA polymerase subunit beta' of Sinapis alba (White mustard).